A 616-amino-acid polypeptide reads, in one-letter code: Electron transfer flavoprotein-ubiquinone oxidoreductase, mitochondrial (616 aa).

Residues Met-1–Cys-32 constitute a mitochondrion transit peptide. Val-70–Ile-84 is a binding site for FAD. N6-acetyllysine is present on Lys-95. The stretch at Ile-108–Asp-129 is an intramembrane region. Residues Lys-131 and Lys-222 each carry the N6-acetyllysine modification. A ubiquinone is bound by residues Gly-304 and Gly-305. N6-acetyllysine is present on residues Lys-356 and Lys-415. Residues Ala-427–Glu-446 lie within the membrane without spanning it. Ser-550 is modified (phosphoserine). Residues Cys-560, Cys-585, Cys-588, and Cys-591 each coordinate [4Fe-4S] cluster. The 4Fe-4S ferredoxin-type domain occupies Phe-576–Pro-605.

This sequence belongs to the ETF-QO/FixC family. Monomer. The cofactor is [4Fe-4S] cluster. FAD serves as cofactor.

It localises to the mitochondrion inner membrane. The enzyme catalyses a ubiquinone + reduced [electron-transfer flavoprotein] = a ubiquinol + oxidized [electron-transfer flavoprotein] + H(+). Functionally, accepts electrons from ETF and reduces ubiquinone. This is Electron transfer flavoprotein-ubiquinone oxidoreductase, mitochondrial (Etfdh) from Rattus norvegicus (Rat).